The primary structure comprises 242 residues: uncharacterized protein (242 aa).

Disordered stretches follow at residues G16 to A121 and P152 to V178. Pro residues-rich tracts occupy residues P50–A64 and E97–P113. Residues K157–R172 are compositionally biased toward basic residues. At T175 the chain carries Phosphothreonine. 5 positions are modified to phosphoserine: S192, S206, S216, S232, and S238. Residues Q215 to L242 form a disordered region. Residues S232 to L242 are compositionally biased toward low complexity.

It is found in the cytoplasm. This is an uncharacterized protein from Rattus norvegicus (Rat).